The following is a 1171-amino-acid chain: DNA-directed RNA polymerase subunit beta (1171 aa).

The protein belongs to the RNA polymerase beta chain family. The RNAP catalytic core consists of 2 alpha, 1 beta, 1 beta' and 1 omega subunit. When a sigma factor is associated with the core the holoenzyme is formed, which can initiate transcription.

The catalysed reaction is RNA(n) + a ribonucleoside 5'-triphosphate = RNA(n+1) + diphosphate. In terms of biological role, DNA-dependent RNA polymerase catalyzes the transcription of DNA into RNA using the four ribonucleoside triphosphates as substrates. In Kineococcus radiotolerans (strain ATCC BAA-149 / DSM 14245 / SRS30216), this protein is DNA-directed RNA polymerase subunit beta.